The following is a 443-amino-acid chain: MFLPQEIIRKKRNGEALSTQEIQFFVQGITNNTIGEGQIAALAMAVYFKDMTMDERVALTCAMRDSGMVLTWDHLNLGGPIVDKHSTGGVGDVVSLMLGPMVAACGGFVPMISGRGLGHTGGTLDKLDAIPGYQTSVDNDRFLKVVKEAGVAIIGQTGDLAPADKRIYAVRDITATVESIAMITGSILSKKLASGLEALVMDVKVGSGAFMPTFEASEELAKSIVAVANGAGCRTSALLTDMNQVLASSAGNAVEVREAVRYLTGEYRNPRIHAVTMALCAEMLISAGLASDDGEARRKLQAVLDNGKAAEIFGRMVTGLGGPSDFMERYDHHLPKAAIVRPVYAANSGFVTAMDTRELGLAVVAMGGGRRAAGDKLDYAVGLTDFIRLGQSVEADKPLALIHAQTEEQFAQAASMVQAAVKIGDTRPEALPEVYRRIGLADL.

The protein belongs to the thymidine/pyrimidine-nucleoside phosphorylase family. In terms of assembly, homodimer.

The enzyme catalyses thymidine + phosphate = 2-deoxy-alpha-D-ribose 1-phosphate + thymine. Its pathway is pyrimidine metabolism; dTMP biosynthesis via salvage pathway; dTMP from thymine: step 1/2. Its function is as follows. The enzymes which catalyze the reversible phosphorolysis of pyrimidine nucleosides are involved in the degradation of these compounds and in their utilization as carbon and energy sources, or in the rescue of pyrimidine bases for nucleotide synthesis. The protein is Thymidine phosphorylase of Aeromonas hydrophila subsp. hydrophila (strain ATCC 7966 / DSM 30187 / BCRC 13018 / CCUG 14551 / JCM 1027 / KCTC 2358 / NCIMB 9240 / NCTC 8049).